A 243-amino-acid polypeptide reads, in one-letter code: Cell division protein FtsQ (243 aa).

Over 1-19 (MKRYNAKRKTHRNLKSIKK) the chain is Cytoplasmic. Residues 20–40 (LIPTVLALLAFVSLLAGIITL) traverse the membrane as a helical segment. Residues 41–243 (HNPKTLPFRQ…SNGLAIQWKN (203 aa)) are Periplasmic-facing. Positions 46 to 115 (LPFRQIKITV…NELEIQVEEQ (70 aa)) constitute a POTRA domain.

Belongs to the FtsQ/DivIB family. FtsQ subfamily. As to quaternary structure, part of a complex composed of FtsB, FtsL and FtsQ.

The protein resides in the cell inner membrane. Essential cell division protein. May link together the upstream cell division proteins, which are predominantly cytoplasmic, with the downstream cell division proteins, which are predominantly periplasmic. May control correct divisome assembly. The sequence is that of Cell division protein FtsQ from Coxiella burnetii (strain RSA 493 / Nine Mile phase I).